Reading from the N-terminus, the 134-residue chain is 6,7-dimethyl-8-ribityllumazine synthase (134 aa).

5-amino-6-(D-ribitylamino)uracil is bound by residues phenylalanine 11, 43–45 (AYD), and 67–69 (AIV). 72–73 (DT) is a binding site for (2S)-2-hydroxy-3-oxobutyl phosphate. Histidine 75 (proton donor) is an active-site residue. A 5-amino-6-(D-ribitylamino)uracil-binding site is contributed by phenylalanine 100. Arginine 115 is a binding site for (2S)-2-hydroxy-3-oxobutyl phosphate.

This sequence belongs to the DMRL synthase family.

It carries out the reaction (2S)-2-hydroxy-3-oxobutyl phosphate + 5-amino-6-(D-ribitylamino)uracil = 6,7-dimethyl-8-(1-D-ribityl)lumazine + phosphate + 2 H2O + H(+). The protein operates within cofactor biosynthesis; riboflavin biosynthesis; riboflavin from 2-hydroxy-3-oxobutyl phosphate and 5-amino-6-(D-ribitylamino)uracil: step 1/2. Functionally, catalyzes the formation of 6,7-dimethyl-8-ribityllumazine by condensation of 5-amino-6-(D-ribitylamino)uracil with 3,4-dihydroxy-2-butanone 4-phosphate. This is the penultimate step in the biosynthesis of riboflavin. In Halorubrum lacusprofundi (strain ATCC 49239 / DSM 5036 / JCM 8891 / ACAM 34), this protein is 6,7-dimethyl-8-ribityllumazine synthase.